We begin with the raw amino-acid sequence, 461 residues long: Zinc transporter 6 (461 aa).

At 1–33 (MGTIHLFRKPQRSFFGKLLQEFRLVAADRRSWK) the chain is on the cytoplasmic side. The chain crosses the membrane as a helical span at residues 34 to 54 (ILLFGAINLTCTGFLLMWCSS). Over 55–64 (TNSIALTAYT) the chain is Extracellular. A helical transmembrane segment spans residues 65 to 85 (YLTIFDLFSLITCLVSYWVMM). At 86-98 (RKPSPAYSFGFER) the chain is on the cytoplasmic side. Residues 99-119 (LEVLAVFASTVLAQLGALFIL) traverse the membrane as a helical segment. The Extracellular portion of the chain corresponds to 120-134 (KESAERFLEQPEIHT). A helical transmembrane segment spans residues 135 to 155 (GRLLVGTFVALSFNLFTMLSI). Residues 156 to 200 (RNKPFAYVSEAASTSWLQEHVADLSRSLCGIIPGLSSIFLPRMNP) lie on the Cytoplasmic side of the membrane. Residues 201-221 (FVLIDLAGAFALCITYMLIEI) form a helical membrane-spanning segment. The Extracellular segment spans residues 222–223 (NN). Residues 224 to 244 (YFAVDTASAIAIALMTFGTMY) traverse the membrane as a helical segment. Residues 245-461 (PMSVYSGKVL…TNNRIGQPRP (217 aa)) lie on the Cytoplasmic side of the membrane. A disordered region spans residues 362 to 393 (PPLKGTDDSNPVTSTPTKPSSPPPEFSFNTPG). Residues 370–379 (SNPVTSTPTK) show a composition bias toward low complexity.

Belongs to the cation diffusion facilitator (CDF) transporter (TC 2.A.4) family. SLC30A subfamily. Heterodimer with SLC30A5; form a functional zinc ion transmembrane transporter.

The protein resides in the golgi apparatus. It is found in the trans-Golgi network membrane. Its function is as follows. Has probably no intrinsic transporter activity but together with SLC30A5 forms a functional zinc ion:proton antiporter heterodimer, mediating zinc entry into the lumen of organelles along the secretory pathway. As part of that zinc ion:proton antiporter, contributes to zinc ion homeostasis within the early secretory pathway and regulates the activation and folding of enzymes like alkaline phosphatases and enzymes involved in phosphatidylinositol glycan anchor biosynthesis. The polypeptide is Zinc transporter 6 (SLC30A6) (Bos taurus (Bovine)).